Here is a 167-residue protein sequence, read N- to C-terminus: Small ribosomal subunit protein uS5 (167 aa).

The S5 DRBM domain maps to 12-75; that stretch reads LQEKLVQVNR…DAARKNMITV (64 aa).

It belongs to the universal ribosomal protein uS5 family. Part of the 30S ribosomal subunit. Contacts proteins S4 and S8.

Its function is as follows. With S4 and S12 plays an important role in translational accuracy. Located at the back of the 30S subunit body where it stabilizes the conformation of the head with respect to the body. The polypeptide is Small ribosomal subunit protein uS5 (Hahella chejuensis (strain KCTC 2396)).